Reading from the N-terminus, the 439-residue chain is Apolipoprotein N-acyltransferase (439 aa).

Transmembrane regions (helical) follow at residues leucine 13–phenylalanine 33, leucine 47–isoleucine 67, phenylalanine 75–leucine 95, tyrosine 97–valine 117, asparagine 149–phenylalanine 169, and isoleucine 175–tyrosine 195. One can recognise a CN hydrolase domain in the interval isoleucine 207 to phenylalanine 439. The active-site Proton acceptor is glutamate 248. Lysine 305 is an active-site residue. The active-site Nucleophile is cysteine 355.

Belongs to the CN hydrolase family. Apolipoprotein N-acyltransferase subfamily.

It localises to the cell inner membrane. It catalyses the reaction N-terminal S-1,2-diacyl-sn-glyceryl-L-cysteinyl-[lipoprotein] + a glycerophospholipid = N-acyl-S-1,2-diacyl-sn-glyceryl-L-cysteinyl-[lipoprotein] + a 2-acyl-sn-glycero-3-phospholipid + H(+). Its pathway is protein modification; lipoprotein biosynthesis (N-acyl transfer). Functionally, catalyzes the phospholipid dependent N-acylation of the N-terminal cysteine of apolipoprotein, the last step in lipoprotein maturation. The chain is Apolipoprotein N-acyltransferase from Aquifex aeolicus (strain VF5).